Here is a 393-residue protein sequence, read N- to C-terminus: S-adenosylmethionine synthase 2 (393 aa).

E9 contacts Mg(2+). Position 15 (H15) interacts with ATP. E43 provides a ligand contact to K(+). Positions 56 and 99 each coordinate L-methionine. ATP is bound by residues 167–169 (DGK), 235–238 (SGRF), D246, 252–253 (RK), A269, K273, and K277. D246 contributes to the L-methionine binding site. K277 serves as a coordination point for L-methionine.

The protein belongs to the AdoMet synthase family. In terms of assembly, homotetramer. The cofactor is Mn(2+). Mg(2+) is required as a cofactor. Requires Co(2+) as cofactor. K(+) serves as cofactor. It depends on NH4(+) as a cofactor. In terms of tissue distribution, mostly expressed in roots, and, to a lower extent, in hypocotyls and cotyledons.

It localises to the cytoplasm. It carries out the reaction L-methionine + ATP + H2O = S-adenosyl-L-methionine + phosphate + diphosphate. The protein operates within amino-acid biosynthesis; S-adenosyl-L-methionine biosynthesis; S-adenosyl-L-methionine from L-methionine: step 1/1. With respect to regulation, inhibited by products of SAMS reaction (SAM, Pi, PPi), substrate analogs (cycloleucine and ethionine), and alternative nucleotides (GTP, CTP and ADP). Strongly repressed by PPPi. In terms of biological role, catalyzes the formation of S-adenosylmethionine from methionine and ATP. The reaction comprises two steps that are both catalyzed by the same enzyme: formation of S-adenosylmethionine (AdoMet) and triphosphate, and subsequent hydrolysis of the triphosphate. This Catharanthus roseus (Madagascar periwinkle) protein is S-adenosylmethionine synthase 2 (SAMS2).